Here is a 128-residue protein sequence, read N- to C-terminus: Small ribosomal subunit protein uS11 (128 aa).

It belongs to the universal ribosomal protein uS11 family. Part of the 30S ribosomal subunit. Interacts with proteins S7 and S18. Binds to IF-3.

Located on the platform of the 30S subunit, it bridges several disparate RNA helices of the 16S rRNA. Forms part of the Shine-Dalgarno cleft in the 70S ribosome. In Desulfosudis oleivorans (strain DSM 6200 / JCM 39069 / Hxd3) (Desulfococcus oleovorans), this protein is Small ribosomal subunit protein uS11.